The chain runs to 735 residues: Catalase-peroxidase (735 aa).

A cross-link (tryptophyl-tyrosyl-methioninium (Trp-Tyr) (with M-246)) is located at residues 97-220 (WHAAGTYRIG…LAAVQMGLIY (124 aa)). The active-site Proton acceptor is H98. Positions 220–246 (YVNPEGPNGKPDPMAAAHDIRETFGRM) form a cross-link, tryptophyl-tyrosyl-methioninium (Tyr-Met) (with W-97). H261 contributes to the heme b binding site. Residues 342-362 (AHQWTPKNPEAASTVPDAHDP) form a disordered region.

It belongs to the peroxidase family. Peroxidase/catalase subfamily. In terms of assembly, homodimer or homotetramer. The cofactor is heme b. Post-translationally, formation of the three residue Trp-Tyr-Met cross-link is important for the catalase, but not the peroxidase activity of the enzyme.

The enzyme catalyses H2O2 + AH2 = A + 2 H2O. It catalyses the reaction 2 H2O2 = O2 + 2 H2O. Bifunctional enzyme with both catalase and broad-spectrum peroxidase activity. This Gloeobacter violaceus (strain ATCC 29082 / PCC 7421) protein is Catalase-peroxidase.